We begin with the raw amino-acid sequence, 746 residues long: Chitin biosynthesis protein CHS6 (746 aa).

The tract at residues 1–25 is disordered; the sequence is MNLFWPSETKKQNEIPGGDYTPGNS. A CHS5-binding region spans residues 734-746; the sequence is LAWIADLDHTVQP.

This sequence belongs to the CHAPS family. As to quaternary structure, component of the CHS5/6 complex composed of the 4 CHAPS proteins BCH1, BCH2, BUD7, and CHS6 as well as at least CHS5 and GTP-bound ARF1. The complex interacts with the cargo protein CHS3.

It localises to the golgi apparatus. Its subcellular location is the trans-Golgi network membrane. Member of the CHS5-ARF1P-binding proteins (CHAPS) which mediates export of specific cargo proteins, including chitin synthase CHS3. The sequence is that of Chitin biosynthesis protein CHS6 (CHS6) from Saccharomyces cerevisiae (strain ATCC 204508 / S288c) (Baker's yeast).